The primary structure comprises 338 residues: NLP effector protein 6 (338 aa).

Positions 1–19 (MRFTTIFWISLTVLATVRA) are cleaved as a signal peptide. Positions 68-119 (LTLSPSASSPAKRNVTLPPDTTMRPDPRQTEPPTEAPTPASTPAPTPDPGPW) are disordered. The N-linked (GlcNAc...) asparagine glycan is linked to asparagine 81. A compositionally biased stretch (pro residues) spans 101-117 (TEAPTPASTPAPTPDPG). Residues 205 to 215 (AIMYSWYFPKD) carry the Conserved undecapeptide motif I motif. The short motif at 222 to 227 (GHRHDW) is the Hepta-peptide GHRHDWE motif II element.

This sequence belongs to the Necrosis inducing protein (NPP1) family.

It localises to the secreted. In terms of biological role, secreted effector that contributes strongly to virulence during infection by P.capsici. Causes large necrotic areas in both host C.annuum and non-host N.benthamiana. This is NLP effector protein 6 from Phytophthora capsici.